A 345-amino-acid polypeptide reads, in one-letter code: tRNA-dihydrouridine(20/20a) synthase (345 aa).

FMN is bound by residues 32–34 and Gln84; that span reads PML. Cys114 serves as the catalytic Proton donor. Residues Lys153, His186, 226-228, and 248-249 each bind FMN; these read NGG and GR.

It belongs to the Dus family. DusA subfamily. It depends on FMN as a cofactor.

The catalysed reaction is 5,6-dihydrouridine(20) in tRNA + NADP(+) = uridine(20) in tRNA + NADPH + H(+). It catalyses the reaction 5,6-dihydrouridine(20) in tRNA + NAD(+) = uridine(20) in tRNA + NADH + H(+). It carries out the reaction 5,6-dihydrouridine(20a) in tRNA + NADP(+) = uridine(20a) in tRNA + NADPH + H(+). The enzyme catalyses 5,6-dihydrouridine(20a) in tRNA + NAD(+) = uridine(20a) in tRNA + NADH + H(+). Its function is as follows. Catalyzes the synthesis of 5,6-dihydrouridine (D), a modified base found in the D-loop of most tRNAs, via the reduction of the C5-C6 double bond in target uridines. Specifically modifies U20 and U20a in tRNAs. The polypeptide is tRNA-dihydrouridine(20/20a) synthase (Escherichia coli O157:H7).